The following is a 99-amino-acid chain: Large ribosomal subunit protein bL27 (99 aa).

Positions 1–9 (MLIMNLQLF) are excised as a propeptide.

This sequence belongs to the bacterial ribosomal protein bL27 family. In terms of processing, the N-terminus is cleaved by ribosomal processing cysteine protease Prp.

In Clostridium botulinum (strain Alaska E43 / Type E3), this protein is Large ribosomal subunit protein bL27.